The primary structure comprises 118 residues: Protein TusC (118 aa).

It belongs to the DsrF/TusC family. In terms of assembly, heterohexamer, formed by a dimer of trimers. The hexameric TusBCD complex contains 2 copies each of TusB, TusC and TusD. The TusBCD complex interacts with TusE.

It localises to the cytoplasm. Functionally, part of a sulfur-relay system required for 2-thiolation of 5-methylaminomethyl-2-thiouridine (mnm(5)s(2)U) at tRNA wobble positions. This is Protein TusC from Salmonella typhi.